We begin with the raw amino-acid sequence, 211 residues long: LexA repressor (211 aa).

The segment at residues Q27–D47 is a DNA-binding region (H-T-H motif). Catalysis depends on for autocatalytic cleavage activity residues S131 and K168.

Belongs to the peptidase S24 family. As to quaternary structure, homodimer.

It catalyses the reaction Hydrolysis of Ala-|-Gly bond in repressor LexA.. Represses a number of genes involved in the response to DNA damage (SOS response), including recA and lexA. In the presence of single-stranded DNA, RecA interacts with LexA causing an autocatalytic cleavage which disrupts the DNA-binding part of LexA, leading to derepression of the SOS regulon and eventually DNA repair. The chain is LexA repressor from Xylella fastidiosa (strain M12).